Here is a 445-residue protein sequence, read N- to C-terminus: 6-phosphogluconate dehydrogenase, decarboxylating (445 aa).

Residues 1-4 (AVMG), 22-24 (NRS), 63-65 (VKA), and Asn-91 each bind NADP(+). Residues Asn-91 and 117–119 (SGG) contribute to the substrate site. Lys-172 functions as the Proton acceptor in the catalytic mechanism. Substrate is bound at residue 175-176 (HN). Glu-179 acts as the Proton donor in catalysis. Positions 180, 249, 276, 434, and 440 each coordinate substrate.

The protein belongs to the 6-phosphogluconate dehydrogenase family. In terms of assembly, homodimer.

It carries out the reaction 6-phospho-D-gluconate + NADP(+) = D-ribulose 5-phosphate + CO2 + NADPH. Its pathway is carbohydrate degradation; pentose phosphate pathway; D-ribulose 5-phosphate from D-glucose 6-phosphate (oxidative stage): step 3/3. Functionally, catalyzes the oxidative decarboxylation of 6-phosphogluconate to ribulose 5-phosphate and CO(2), with concomitant reduction of NADP to NADPH. This chain is 6-phosphogluconate dehydrogenase, decarboxylating (gnd), found in Raoultella planticola (Klebsiella planticola).